The primary structure comprises 102 residues: Small ribosomal subunit protein uS10 (102 aa).

This sequence belongs to the universal ribosomal protein uS10 family. As to quaternary structure, part of the 30S ribosomal subunit.

Involved in the binding of tRNA to the ribosomes. The protein is Small ribosomal subunit protein uS10 of Planobispora rosea.